Here is a 589-residue protein sequence, read N- to C-terminus: Netrin-G2 (589 aa).

An N-terminal signal peptide occupies residues 1 to 17; that stretch reads MLRLLALFLHCLPLVSG. 3 disulfide bridges follow: Cys22–Cys39, Cys61–Cys81, and Cys69–Cys77. In terms of domain architecture, Laminin N-terminal spans 35–286; that stretch reads EFYACQPKVM…AISNIEVIGR (252 aa). The NGL discriminant loop I stretch occupies residues 69-88; it reads CSHENPYLCSNECDASNPDL. Asn122 and Asn128 each carry an N-linked (GlcNAc...) asparagine glycan. The cysteines at positions 171 and 195 are disulfide-linked. The segment at 201–203 is NGL discriminant loop II; that stretch reads RWA. Residues 264–267 are NGL discriminant loop III; it reads TYVQ. Intrachain disulfides connect Cys287–Cys296, Cys289–Cys305, Cys307–Cys316, Cys319–Cys344, Cys413–Cys422, Cys415–Cys433, Cys436–Cys445, Cys448–Cys466, Cys469–Cys481, Cys471–Cys487, Cys489–Cys498, Cys501–Cys511, Cys516–Cys529, Cys523–Cys535, and Cys537–Cys546. Laminin EGF-like domains are found at residues 287-346, 413-468, and 469-513; these read CKCN…ACAA, CECY…VCIE, and CNCN…GCYP. Asn310 is a glycosylation site (N-linked (GlcNAc...) asparagine). N-linked (GlcNAc...) asparagine glycosylation occurs at Asn455. N-linked (GlcNAc...) asparagine glycosylation is present at Asn482. Gly566 carries the GPI-anchor amidated glycine lipid modification. The propeptide at 567-589 is removed in mature form; that stretch reads IVPRPDTLLGCLLLLGLAARLAC.

In terms of assembly, interacts with LRRC4. Post-translationally, N-glycosylated. As to expression, expression is restricted primarily to neurons of the CNS, particularly in the cerebral cortex, habenular nucleus and superior colliculus. Low levels in lung, kidney, heart and spleen.

It localises to the cell membrane. Functionally, involved in controlling patterning and neuronal circuit formation at the laminar, cellular, subcellular and synaptic levels. Promotes neurite outgrowth of both axons and dendrites. This Mus musculus (Mouse) protein is Netrin-G2 (Ntng2).